The following is a 171-amino-acid chain: MEKRLQEAQVYKEEGNQRYREGKYRDAVSRYHRALLQLRGLDPSLPSPLSSLGPQGPALTPEQENILHTIQTHCYNNLAACLLQMEPVNYERVREYSQKVLERQPDNAKALYRAGVAFFHLQDYDRARHHLLAAVNRQPKDANVRRYLQLTQSELSSYHRKEKQLYLGMFG.

3 TPR repeats span residues 8–41, 72–107, and 108–141; these read AQVY…LRGL, THCY…QPDN, and AKAL…QPKD.

It belongs to the TTC9 family.

This chain is Tetratricopeptide repeat protein 9C (Ttc9c), found in Mus musculus (Mouse).